Here is a 267-residue protein sequence, read N- to C-terminus: tRNA-cytidine(32) 2-sulfurtransferase 2 (267 aa).

Residues 42-47 carry the PP-loop motif motif; sequence SGGKDS. [4Fe-4S] cluster contacts are provided by Cys117, Cys120, and Cys208.

Belongs to the TtcA family. In terms of assembly, homodimer. Mg(2+) serves as cofactor. [4Fe-4S] cluster is required as a cofactor.

It localises to the cytoplasm. It catalyses the reaction cytidine(32) in tRNA + S-sulfanyl-L-cysteinyl-[cysteine desulfurase] + AH2 + ATP = 2-thiocytidine(32) in tRNA + L-cysteinyl-[cysteine desulfurase] + A + AMP + diphosphate + H(+). It functions in the pathway tRNA modification. Its function is as follows. Catalyzes the ATP-dependent 2-thiolation of cytidine in position 32 of tRNA, to form 2-thiocytidine (s(2)C32). The sulfur atoms are provided by the cysteine/cysteine desulfurase (IscS) system. This chain is tRNA-cytidine(32) 2-sulfurtransferase 2, found in Francisella tularensis subsp. holarctica (strain FTNF002-00 / FTA).